An 888-amino-acid polypeptide reads, in one-letter code: Pyruvate dehydrogenase E1 component (888 aa).

As to quaternary structure, homodimer. Part of the PDH complex, consisting of multiple copies of pyruvate dehydrogenase (E1), dihydrolipoamide acetyltransferase (E2) and lipoamide dehydrogenase (E3). It depends on thiamine diphosphate as a cofactor.

The catalysed reaction is N(6)-[(R)-lipoyl]-L-lysyl-[protein] + pyruvate + H(+) = N(6)-[(R)-S(8)-acetyldihydrolipoyl]-L-lysyl-[protein] + CO2. Component of the pyruvate dehydrogenase (PDH) complex, that catalyzes the overall conversion of pyruvate to acetyl-CoA and CO(2). The polypeptide is Pyruvate dehydrogenase E1 component (aceE) (Buchnera aphidicola subsp. Schizaphis graminum (strain Sg)).